A 127-amino-acid polypeptide reads, in one-letter code: Large ribosomal subunit protein bL12 (127 aa).

It belongs to the bacterial ribosomal protein bL12 family. Homodimer. Part of the ribosomal stalk of the 50S ribosomal subunit. Forms a multimeric L10(L12)X complex, where L10 forms an elongated spine to which 2 to 4 L12 dimers bind in a sequential fashion. Binds GTP-bound translation factors.

Functionally, forms part of the ribosomal stalk which helps the ribosome interact with GTP-bound translation factors. Is thus essential for accurate translation. The protein is Large ribosomal subunit protein bL12 of Rhizobium etli (strain ATCC 51251 / DSM 11541 / JCM 21823 / NBRC 15573 / CFN 42).